The primary structure comprises 353 residues: Aromatic amino acid aminotransferase (353 aa).

Lys217 carries the post-translational modification N6-(pyridoxal phosphate)lysine.

The protein belongs to the class-II pyridoxal-phosphate-dependent aminotransferase family. As to quaternary structure, homodimer. The cofactor is pyridoxal 5'-phosphate.

It catalyses the reaction an aromatic L-alpha-amino acid + 2-oxoglutarate = an aromatic oxo-acid + L-glutamate. Aminotransferase that catalyzes the conversion of aromatic amino acids and 2-oxoglutarate into corresponding aromatic oxo acids and L-glutamate. The chain is Aromatic amino acid aminotransferase from Mycobacterium bovis (strain ATCC BAA-935 / AF2122/97).